The sequence spans 395 residues: Dihydroorotate dehydrogenase (quinone), mitochondrial (395 aa).

Residues 1–10 (MAWRHLKKRA) constitute a mitochondrion; not cleaved transit peptide. At 1 to 10 (MAWRHLKKRA) the chain is on the mitochondrial matrix side. Residues 11-30 (QDAVIILGGGGLLFASYLMA) form a helical membrane-spanning segment. Residues 31–395 (TGDERFYAEH…TDAIGADHRR (365 aa)) are Mitochondrial intermembrane-facing. FMN contacts are provided by residues 95 to 99 (AGFDK) and serine 119. Position 99 (lysine 99) interacts with substrate. 144 to 148 (NRYGF) is a substrate binding site. Positions 180 and 211 each coordinate FMN. A substrate-binding site is contributed by 211–216 (NVSSPN). Serine 214 (nucleophile) is an active-site residue. FMN contacts are provided by lysine 254 and threonine 282. A substrate-binding site is contributed by 283 to 284 (NT). FMN-binding positions include glycine 305, glycine 334, and 355–356 (YT).

It belongs to the dihydroorotate dehydrogenase family. Type 2 subfamily. In terms of assembly, monomer. The cofactor is FMN. Post-translationally, the uncleaved transit peptide is required for mitochondrial targeting and proper membrane integration.

The protein localises to the mitochondrion inner membrane. The catalysed reaction is (S)-dihydroorotate + a quinone = orotate + a quinol. Its pathway is pyrimidine metabolism; UMP biosynthesis via de novo pathway; orotate from (S)-dihydroorotate (quinone route): step 1/1. In terms of biological role, catalyzes the conversion of dihydroorotate to orotate with quinone as electron acceptor. Required for UMP biosynthesis via de novo pathway. The polypeptide is Dihydroorotate dehydrogenase (quinone), mitochondrial (DHODH) (Homo sapiens (Human)).